Reading from the N-terminus, the 212-residue chain is Ras-related protein Rab-2A (212 aa).

Ala-2 bears the N-acetylalanine mark. The interval Ala-2–Lys-19 is required for interaction with PRKCI. GTP is bound by residues Gly-16, Val-17, Gly-18, Lys-19, Ser-20, Cys-21, and Thr-38. Ser-20 contributes to the Mg(2+) binding site. A Switch 1 motif is present at residues Leu-37–Glu-42. Mg(2+) contacts are provided by Thr-38 and Asp-61. A Switch 2 motif is present at residues Ala-63–Thr-72. GTP contacts are provided by Gly-64, Asn-119, Lys-120, Asp-122, Ala-150, and Lys-151. S-geranylgeranyl cysteine attachment occurs at residues Cys-211 and Cys-212.

The protein belongs to the small GTPase superfamily. Rab family. As to quaternary structure, interacts with PRKCI. Interacts with TRIP11. Interacts (in GTP-bound form) with GARIN1B. Interacts (GTP-bound) with HOPS complex component VPS39; interaction contributes to obtaining a functional HOPS complex that promotes autophagosome-lysosome membrane fusion driven by STX17-SNAP29-VAMP8. May interact with VPS41. Mg(2+) serves as cofactor. Prenylated. Prenylation is required for association with cellular membranes. In terms of tissue distribution, brain and parietal cells.

The protein resides in the endoplasmic reticulum-Golgi intermediate compartment membrane. It is found in the melanosome. It localises to the endoplasmic reticulum membrane. The protein localises to the golgi apparatus membrane. Its subcellular location is the cytoplasmic vesicle. The protein resides in the secretory vesicle. It is found in the acrosome. It localises to the autophagosome membrane. The catalysed reaction is GTP + H2O = GDP + phosphate + H(+). Regulated by guanine nucleotide exchange factors (GEFs) which promote the exchange of bound GDP for free GTP, GTPase activating proteins (GAPs) which increase the GTP hydrolysis activity, and GDP dissociation inhibitors (GDIs) which inhibit the dissociation of the nucleotide from the GTPase. Its function is as follows. The small GTPases Rab are key regulators of intracellular membrane trafficking, from the formation of transport vesicles to their fusion with membranes. Rabs cycle between active GTP-bound and inactive GDP-bound states. In their active state, drive transport of vesicular carriers from donor organelles to acceptor organelles to regulate the membrane traffic that maintains organelle identity and morphology. RAB2A regulates autophagy by promoting autophagosome-lysosome fusion via recruitment of the HOPS endosomal tethering complex; this process involves autophagosomal RAB2A and lysosomal RAB39A recruitment of HOPS subcomplexes VPS39-VPS11 and VPS41-VPS16-VPS18-VPS33A, respectively, which assemble into a functional complex to mediate membrane tethering and SNAREs-driven membrane fusion. Required for protein transport from the endoplasmic reticulum to the Golgi complex. Regulates the compacted morphology of the Golgi. Together with RAB2B, redundantly required for efficient autophagic flux. This Oryctolagus cuniculus (Rabbit) protein is Ras-related protein Rab-2A (RAB2A).